The primary structure comprises 270 residues: MLGLQIITLLFIPTLLYAYELEPLERTETPLEKELGYWCTYANHCSFCWDCQDGICRNKAFKNHSPILENDYIANCSVYRRNDFCIYYITSIKPHKIYRTECSEHLSHEWHEAVIRKWQKLLTYGFYLVGCVLVVNYIRKRSLQTIVYLLVLLVIFFLLSQLMLYRELEDKKHKTGSIPPERELEHWCTHGKYCNFCWDCQNGICRNKVFKNHPPIGENDFIRYDCWTTHLLNKCYYEKIYKHFNTHIMECSQPTHFKWYDNLMKKQDIM.

Positions 1–26 are cleaved as a signal peptide; it reads MLGLQIITLLFIPTLLYAYELEPLER. An A repeat occupies 1-146; that stretch reads MLGLQIITLL…YIRKRSLQTI (146 aa). Asn-75 carries an N-linked (GlcNAc...) asparagine; by host glycan. 2 consecutive transmembrane segments (helical) span residues 118 to 138 and 146 to 166; these read WQKL…VNYI and IVYL…MLYR. A B repeat occupies 147–270; sequence VYLLVLLVIF…DNLMKKQDIM (124 aa).

Belongs to the asfivirus MGF 110 family.

The protein resides in the membrane. Plays a role in virus cell tropism, and may be required for efficient virus replication in macrophages. This chain is Protein MGF 110-1L, found in Ornithodoros (relapsing fever ticks).